The chain runs to 455 residues: Protein king tubby (455 aa).

The interval 35–92 (RPMSGMRGNSRELHAYDGPMQFIGSPHNPDQILSNNSSSVHLSSSMNSSRNNSNNLRS) is disordered. The span at 67-92 (LSNNSSSVHLSSSMNSSRNNSNNLRS) shows a compositional bias: low complexity. Serine 144 carries the post-translational modification Phosphoserine.

This sequence belongs to the TUB family.

Its subcellular location is the cytoplasm. It is found in the nucleus. It localises to the cell projection. The protein localises to the cilium membrane. The protein resides in the rhabdomere. This Drosophila virilis (Fruit fly) protein is Protein king tubby.